The primary structure comprises 484 residues: Arginyl-tRNA--protein transferase 1 (484 aa).

This sequence belongs to the R-transferase family.

It catalyses the reaction an N-terminal L-alpha-aminoacyl-[protein] + L-arginyl-tRNA(Arg) = an N-terminal L-arginyl-L-aminoacyl-[protein] + tRNA(Arg) + H(+). Involved in the post-translational conjugation of arginine to the N-terminal aspartate or glutamate of a protein. This arginylation is required for degradation of the protein via the ubiquitin pathway. Does not arginylate cysteine residues. The polypeptide is Arginyl-tRNA--protein transferase 1 (Ate1) (Drosophila melanogaster (Fruit fly)).